A 577-amino-acid polypeptide reads, in one-letter code: External alternative NAD(P)H-ubiquinone oxidoreductase B1, mitochondrial (577 aa).

The N-terminal 35 residues, 1–35, are a transit peptide targeting the mitochondrion; it reads MRGFTYLSKVLHSHSSYSKLLVLCSVSTGGLLVYA. 57 to 87 is a binding site for FAD; it reads RVVVLGTGWGGTSFLKDVDISSYDVQVVSPR. NAD(+) is bound at residue 221–257; the sequence is LHFVIVGGGPTGVEFAAELHDYVYEDLVKIYPSVKDF. Residues 378–413 enclose the EF-hand domain; that stretch reads KVMEDISAIFKAADKDDSGTLSIEEFRDVLEDIIIR. The Ca(2+) site is built by D391, D393, S395, T397, and E402. The Microbody targeting signal signature appears at 568-577; sequence YIFGRDSSRI.

It belongs to the NADH dehydrogenase family. FAD is required as a cofactor.

Its subcellular location is the mitochondrion inner membrane. It localises to the peroxisome. It carries out the reaction a quinone + NADH + H(+) = a quinol + NAD(+). The enzyme catalyses a ubiquinone + NADH + H(+) = a ubiquinol + NAD(+). With respect to regulation, activity is calcium-dependent with a more pronounced effect at higher pH. Alternative NADH-ubiquinone oxidoreductase which catalyzes the oxidation of mitochondrial NADH does not translocate protons across the inner mitochondrial membrane. Calcium-dependent NAD(P)H dehydrogenase. Binds calcium ions. The protein is External alternative NAD(P)H-ubiquinone oxidoreductase B1, mitochondrial (NDB1) of Solanum tuberosum (Potato).